A 192-amino-acid polypeptide reads, in one-letter code: Phosphoheptose isomerase (192 aa).

The 159-residue stretch at 34 to 192 (VVDAYKAGNK…VERELFVKGK (159 aa)) folds into the SIS domain. 49 to 51 (NGG) lines the substrate pocket. Zn(2+) contacts are provided by His58 and Glu62. Substrate is bound by residues Glu62, 91 to 92 (ND), 117 to 119 (STS), Ser122, and Gln169. Gln169 and His177 together coordinate Zn(2+).

This sequence belongs to the SIS family. GmhA subfamily. In terms of assembly, homotetramer. The cofactor is Zn(2+).

Its subcellular location is the cytoplasm. It catalyses the reaction 2 D-sedoheptulose 7-phosphate = D-glycero-alpha-D-manno-heptose 7-phosphate + D-glycero-beta-D-manno-heptose 7-phosphate. The protein operates within carbohydrate biosynthesis; D-glycero-D-manno-heptose 7-phosphate biosynthesis; D-glycero-alpha-D-manno-heptose 7-phosphate and D-glycero-beta-D-manno-heptose 7-phosphate from sedoheptulose 7-phosphate: step 1/1. Functionally, catalyzes the isomerization of sedoheptulose 7-phosphate in D-glycero-D-manno-heptose 7-phosphate. The protein is Phosphoheptose isomerase of Citrifermentans bemidjiense (strain ATCC BAA-1014 / DSM 16622 / JCM 12645 / Bem) (Geobacter bemidjiensis).